A 457-amino-acid polypeptide reads, in one-letter code: Serine--tRNA ligase (457 aa).

252 to 254 (TAE) contacts L-serine. ATP contacts are provided by residues 283–285 (RKE) and Val299. Glu306 is a binding site for L-serine. Residue 370–373 (EMVS) participates in ATP binding. Thr406 is a binding site for L-serine.

The protein belongs to the class-II aminoacyl-tRNA synthetase family. Type-1 seryl-tRNA synthetase subfamily. In terms of assembly, homodimer. The tRNA molecule binds across the dimer.

Its subcellular location is the cytoplasm. It carries out the reaction tRNA(Ser) + L-serine + ATP = L-seryl-tRNA(Ser) + AMP + diphosphate + H(+). The enzyme catalyses tRNA(Sec) + L-serine + ATP = L-seryl-tRNA(Sec) + AMP + diphosphate + H(+). It participates in aminoacyl-tRNA biosynthesis; selenocysteinyl-tRNA(Sec) biosynthesis; L-seryl-tRNA(Sec) from L-serine and tRNA(Sec): step 1/1. Functionally, catalyzes the attachment of serine to tRNA(Ser). Is also able to aminoacylate tRNA(Sec) with serine, to form the misacylated tRNA L-seryl-tRNA(Sec), which will be further converted into selenocysteinyl-tRNA(Sec). This chain is Serine--tRNA ligase, found in Saccharolobus islandicus (strain Y.G.57.14 / Yellowstone #1) (Sulfolobus islandicus).